A 355-amino-acid chain; its full sequence is Nematocyst expressed protein 3 (355 aa).

An N-terminal signal peptide occupies residues 1–18 (MKLTYILLIAVVGVAIEA). ShKT domains follow at residues 50–89 (CKDV…CKLC), 107–134 (QPQQ…CQLC), and 140–182 (SGPV…CNTY). 6 disulfides stabilise this stretch: C50-C89, C57-C82, C71-C86, C116-C131, C149-C175, and C158-C179. The propeptide occupies 92 to 355 (KRSKKQSDYM…KKSKSHKKQH (264 aa)). The tract at residues 202–355 (YQPNAMPTPP…KKSKSHKKQH (154 aa)) is disordered. The span at 207–221 (MPTPPQGVTPAPLPP) shows a compositional bias: pro residues. 3 stretches are compositionally biased toward low complexity: residues 222 to 232 (YFQQQGYGYPQ), 240 to 270 (VQPG…TTTE), and 277 to 332 (TEAA…AQSD). Positions 335 to 355 (NKKKHKKDKAQKKSKSHKKQH) are enriched in basic residues.

It belongs to the NEP3 family. As to expression, nematocytes. In late planulae, transcripts are found throughout the ectoderm in nematocytes, with high concentration of expressing cells in the oral pole. In primary polyps, is expressed in nematocytes in the body wall and physa ectoderm and in the upper and lower pharynx.

It is found in the nematocyst. Its subcellular location is the secreted. Its function is as follows. Neurotoxin. In vivo, induces pronounced contraction and tail twitching on zebrafish larvae, as well as death 5 hours later. This is Nematocyst expressed protein 3 from Nematostella vectensis (Starlet sea anemone).